A 97-amino-acid chain; its full sequence is Aspartyl/glutamyl-tRNA(Asn/Gln) amidotransferase subunit C (97 aa).

The protein belongs to the GatC family. As to quaternary structure, heterotrimer of A, B and C subunits.

It carries out the reaction L-glutamyl-tRNA(Gln) + L-glutamine + ATP + H2O = L-glutaminyl-tRNA(Gln) + L-glutamate + ADP + phosphate + H(+). The catalysed reaction is L-aspartyl-tRNA(Asn) + L-glutamine + ATP + H2O = L-asparaginyl-tRNA(Asn) + L-glutamate + ADP + phosphate + 2 H(+). Allows the formation of correctly charged Asn-tRNA(Asn) or Gln-tRNA(Gln) through the transamidation of misacylated Asp-tRNA(Asn) or Glu-tRNA(Gln) in organisms which lack either or both of asparaginyl-tRNA or glutaminyl-tRNA synthetases. The reaction takes place in the presence of glutamine and ATP through an activated phospho-Asp-tRNA(Asn) or phospho-Glu-tRNA(Gln). This Prochlorococcus marinus (strain MIT 9515) protein is Aspartyl/glutamyl-tRNA(Asn/Gln) amidotransferase subunit C.